A 357-amino-acid chain; its full sequence is Arginine kinase Cal b 2.0101 (357 aa).

Residues 9 to 91 (KLEEGFKKLE…FDPIIEDYHK (83 aa)) form the Phosphagen kinase N-terminal domain. Residue 64–68 (GVGVY) participates in L-arginine binding. Residues 119 to 356 (FVISTRVRCG…LELIKIEKEM (238 aa)) enclose the Phosphagen kinase C-terminal domain. Residues 122–126 (STRVR) and histidine 185 contribute to the ATP site. A disulfide bridge connects residues cysteine 201 and cysteine 271. Residue glutamate 225 coordinates L-arginine. Arginine 229 is an ATP binding site. Cysteine 271 is an L-arginine binding site. ATP contacts are provided by residues 280–284 (RASVH) and 309–314 (RGTRGE). Glutamate 314 contacts L-arginine.

Belongs to the ATP:guanido phosphotransferase family. As to expression, expressed in chela muscle (at protein level). Expressed in muscle.

It carries out the reaction L-arginine + ATP = N(omega)-phospho-L-arginine + ADP + H(+). Functionally, catalyzes the reversible transfer of high energy ATP gamma-phosphate group to L-arginine. The chain is Arginine kinase Cal b 2.0101 from Callinectes bellicosus (Warrior swimming crab).